The sequence spans 578 residues: Acyl-CoA ligase AKT1 (578 aa).

ATP-binding positions include 210–218 (SSGTSGAQK), 350–355 (QCYGAT), Asp-438, Arg-457, and Lys-554. Residues 281 to 350 (DVEDLLSIVE…RHHPTWKTKQ (70 aa)) are SBD1. The tract at residues 351–413 (CYGATEAGTA…VSSPSLAIGY (63 aa)) is SBD2. Residues 576 to 578 (SKI) carry the Peroxisomal targeting signal type 1 motif.

The protein localises to the peroxisome. It functions in the pathway mycotoxin biosynthesis. Acyl-CoA ligase; part of the gene clusters that mediate the biosynthesis of the host-selective toxins (HSTs) AK-toxins responsible for Japanese pear black spot disease by the Japanese pear pathotype. AK-toxins are esters of 9,10-epoxy 8-hydroxy 9-methyldecatrienoic acid (EDA). On cellular level, AK-toxins affect plasma membrane of susceptible cells and cause a sudden increase in loss of K(+) after a few minutes of toxin treatment. The acyl-CoA ligase AKT1, the hydrolase AKT2 and enoyl-CoA hydratase AKT3 are all involved in the biosynthesis of the AK-, AF- and ACT-toxin common 9,10-epoxy-8-hydroxy-9-methyl-decatrienoic acid (EDA) structural moiety. Part of the EDA biosynthesis occurs in the peroxisome since these 3 enzymes are localized in peroxisomes. The exact roles of the 3 enzymes, as well as of additional AK-toxin clusters enzymes, including AKT4, AKT6 and AKTS1, have still to be elucidated. The Cytochrome P450 monooxygenase AKT7 on the other side functions to limit production of EDA and AK-toxin, probably via the catalysis of a side reaction of EDA or its precursor. In Alternaria alternata (Alternaria rot fungus), this protein is Acyl-CoA ligase AKT1.